The primary structure comprises 337 residues: MNTEATHDQNEALTTGARLRNAREQLGLSQQAVAERLCLKVSTVRDIEEDKAPADLASTFLRGYIRSYARLVHIPEEELLLGLEKQAPLRAAKVAPMQSFSLGKRRKKRDGWLMTFTWLVLFVVIGLSGAWWWQDHKAQQEEITTMADQSSAELSSNSEQGQSVPLNTSTTTDPATTSTPPASVDTTATNTQTPAVTAPAPAVDPQQNAVVSPSQANVDTAATPAPTAATTPDGAAPLPTDQAGVTTPVADPNALVMNFTADCWLEVTDATGKKLFSGMQRKDGNLNLTGQAPYKLKIGAPAAVQIQYQGKPVDLSRFIRTNQVARLTLNAEQSPAQ.

At 1 to 111 (MNTEATHDQN…LGKRRKKRDG (111 aa)) the chain is on the cytoplasmic side. An HTH cro/C1-type domain is found at 19 to 71 (LRNAREQLGLSQQAVAERLCLKVSTVRDIEEDKAPADLASTFLRGYIRSYARL). Residues 30-49 (QQAVAERLCLKVSTVRDIEE) constitute a DNA-binding region (H-T-H motif). Residues 112-132 (WLMTFTWLVLFVVIGLSGAWW) traverse the membrane as a helical; Signal-anchor for type II membrane protein segment. The Periplasmic segment spans residues 133 to 337 (WQDHKAQQEE…TLNAEQSPAQ (205 aa)). A compositionally biased stretch (polar residues) spans 145 to 167 (TMADQSSAELSSNSEQGQSVPLN). The tract at residues 145 to 235 (TMADQSSAEL…PTAATTPDGA (91 aa)) is disordered. The span at 168 to 207 (TSTTTDPATTSTPPASVDTTATNTQTPAVTAPAPAVDPQQ) shows a compositional bias: low complexity. Polar residues predominate over residues 208–218 (NAVVSPSQANV). Positions 219–235 (DTAATPAPTAATTPDGA) are enriched in low complexity.

Belongs to the RodZ family.

The protein resides in the cell inner membrane. In terms of biological role, cytoskeletal protein that is involved in cell-shape control through regulation of the length of the long axis. The chain is Cytoskeleton protein RodZ from Shigella boydii serotype 4 (strain Sb227).